A 51-amino-acid chain; its full sequence is Large ribosomal subunit protein eL39 (51 aa).

The protein belongs to the eukaryotic ribosomal protein eL39 family. In terms of assembly, interacts with YIH1.

The protein is Large ribosomal subunit protein eL39 (RPL39) of Kluyveromyces lactis (strain ATCC 8585 / CBS 2359 / DSM 70799 / NBRC 1267 / NRRL Y-1140 / WM37) (Yeast).